Here is a 491-residue protein sequence, read N- to C-terminus: Endoglucanase 14 (491 aa).

An N-terminal signal peptide occupies residues 1–31 (MSQLKIGSSQCLWTSICIVLFVLSMARGAVS). Asp-86 (nucleophile) is an active-site residue. An N-linked (GlcNAc...) asparagine glycan is attached at Asn-397. Active-site residues include His-413, Asp-465, and Glu-474.

This sequence belongs to the glycosyl hydrolase 9 (cellulase E) family.

The protein localises to the secreted. The catalysed reaction is Endohydrolysis of (1-&gt;4)-beta-D-glucosidic linkages in cellulose, lichenin and cereal beta-D-glucans.. The chain is Endoglucanase 14 from Arabidopsis thaliana (Mouse-ear cress).